Consider the following 327-residue polypeptide: Nucleotide-binding protein Mflv_3714 (327 aa).

Positions 1 to 22 (MTRQGMRDDLRGEADSVVHDGT) are enriched in basic and acidic residues. The tract at residues 1–29 (MTRQGMRDDLRGEADSVVHDGTDDIDNEN) is disordered. Position 50–57 (50–57 (GLSGAGRG)) interacts with ATP. 101–104 (DVRS) lines the GTP pocket.

Belongs to the RapZ-like family.

Its function is as follows. Displays ATPase and GTPase activities. The chain is Nucleotide-binding protein Mflv_3714 from Mycolicibacterium gilvum (strain PYR-GCK) (Mycobacterium gilvum (strain PYR-GCK)).